An 86-amino-acid polypeptide reads, in one-letter code: YcgL domain-containing protein IL1825 (86 aa).

A YcgL domain is found at 1-85; it reads MLCDVYRSSK…KREELQVNVN (85 aa).

The chain is YcgL domain-containing protein IL1825 from Idiomarina loihiensis (strain ATCC BAA-735 / DSM 15497 / L2-TR).